The chain runs to 585 residues: A-type ATP synthase subunit A (585 aa).

Residues 192–211 (MRQEWPVREPRPTVEKKTPR) form a disordered region. A compositionally biased stretch (basic and acidic residues) spans 196-211 (WPVREPRPTVEKKTPR). ATP is bound at residue 237 to 244 (GPFGSGKT).

The protein belongs to the ATPase alpha/beta chains family. In terms of assembly, has multiple subunits with at least A(3), B(3), C, D, E, F, H, I and proteolipid K(x).

It localises to the cell membrane. It catalyses the reaction ATP + H2O + 4 H(+)(in) = ADP + phosphate + 5 H(+)(out). In terms of biological role, component of the A-type ATP synthase that produces ATP from ADP in the presence of a proton gradient across the membrane. The A chain is the catalytic subunit. The sequence is that of A-type ATP synthase subunit A from Haloquadratum walsbyi (strain DSM 16790 / HBSQ001).